A 430-amino-acid polypeptide reads, in one-letter code: RNA-binding protein 34 (430 aa).

3 disordered regions span residues 1 to 55, 72 to 123, and 134 to 153; these read MALE…GTGR, VPVP…ADRE, and EIHQ…VKVA. A phosphoserine mark is found at Ser14, Ser28, and Ser99. Residues 23 to 34 show a composition bias toward basic and acidic residues; sequence DGVRGSPPEDYR. Basic and acidic residues predominate over residues 113-123; it reads TNAEKKLADRE. Lys151 is subject to N6-acetyllysine. 2 consecutive RRM domains span residues 185–280 and 287–364; these read RTVF…LASE and RSVF…RSVN. Residue Lys242 forms a Glycyl lysine isopeptide (Lys-Gly) (interchain with G-Cter in SUMO2) linkage. Ser288 is subject to Phosphoserine. 2 disordered regions span residues 365–395 and 411–430; these read KEKF…KTAE and KTKK…RKQK.

Belongs to the RRM RBM34 family.

It localises to the nucleus. The protein localises to the nucleolus. The sequence is that of RNA-binding protein 34 (RBM34) from Homo sapiens (Human).